The sequence spans 166 residues: Protein TIFY 11e (166 aa).

Positions 65–100 (ASSAAAQMTIFYGGRVLVLDECPADRAAALLRLAAS) constitute a Tify domain. A Jas motif is present at residues 123–148 (PVARKASLQRFMEKRKGRLAARGQPY). The Nuclear localization signal motif lies at 125–132 (ARKASLQR).

Belongs to the TIFY/JAZ family. Post-translationally, ubiquitinated. Targeted for degradation by the SCF(COI1) E3 ubiquitin ligase-proteasome pathway during jasmonate signaling.

The protein resides in the nucleus. Functionally, repressor of jasmonate responses. The protein is Protein TIFY 11e of Oryza sativa subsp. japonica (Rice).